The chain runs to 335 residues: Beta-hexosaminidase (335 aa).

Substrate is bound by residues Asp60, Arg68, Arg133, and 163–164 (KH). Catalysis depends on His176, which acts as the Proton donor/acceptor. The active-site Nucleophile is Asp247.

It belongs to the glycosyl hydrolase 3 family. NagZ subfamily.

Its subcellular location is the cytoplasm. It catalyses the reaction Hydrolysis of terminal non-reducing N-acetyl-D-hexosamine residues in N-acetyl-beta-D-hexosaminides.. Its pathway is cell wall biogenesis; peptidoglycan recycling. In terms of biological role, plays a role in peptidoglycan recycling by cleaving the terminal beta-1,4-linked N-acetylglucosamine (GlcNAc) from peptide-linked peptidoglycan fragments, giving rise to free GlcNAc, anhydro-N-acetylmuramic acid and anhydro-N-acetylmuramic acid-linked peptides. This is Beta-hexosaminidase from Xylella fastidiosa (strain M23).